Reading from the N-terminus, the 640-residue chain is Threonine--tRNA ligase (640 aa).

Positions 1 to 59 constitute a TGS domain; the sequence is MKIKVVLPDGSEREYEKGTKPMEIAREVGIKKVIGAVVDEELWDLKRPLERDCRIRFVT. The segment at 240 to 531 is catalytic; that stretch reads DHRKLGPQLE…LIEHFAGAFP (292 aa). Residues cysteine 332, histidine 383, and histidine 508 each contribute to the Zn(2+) site.

This sequence belongs to the class-II aminoacyl-tRNA synthetase family. As to quaternary structure, homodimer. Zn(2+) serves as cofactor.

It is found in the cytoplasm. The catalysed reaction is tRNA(Thr) + L-threonine + ATP = L-threonyl-tRNA(Thr) + AMP + diphosphate + H(+). In terms of biological role, catalyzes the attachment of threonine to tRNA(Thr) in a two-step reaction: L-threonine is first activated by ATP to form Thr-AMP and then transferred to the acceptor end of tRNA(Thr). Also edits incorrectly charged L-seryl-tRNA(Thr). The protein is Threonine--tRNA ligase of Thermotoga neapolitana (strain ATCC 49049 / DSM 4359 / NBRC 107923 / NS-E).